Consider the following 471-residue polypeptide: UDP-glycosyltransferase 1 (471 aa).

His-15 (proton acceptor) is an active-site residue. His-15 contacts an anthocyanidin. Asp-124 functions as the Charge relay in the catalytic mechanism. The UDP-alpha-D-glucose site is built by Thr-146, Ala-348, Gln-350, His-365, Trp-368, Asn-369, Ser-370, and Glu-373. Residue Ala-388 coordinates an anthocyanidin. UDP-alpha-D-glucose is bound by residues Glu-389 and Gln-390.

This sequence belongs to the UDP-glycosyltransferase family. Expressed in roots. Detected in stems and leaves.

It carries out the reaction a 7-hydroxyisoflavone + UDP-alpha-D-glucose = a 7-hydroxyisoflavone 7-O-beta-D-glucoside + UDP + H(+). Isoflavone 7-O-glucosyltransferase converting daidzein to daidzin, genistein to genistin and formononetin to ononin. Shows some activity toward the chalcone isoliquiritigenin, the flavanones liquiritigenin and naringenin, and the flavone apigenin, but not toward cyanidin, luteolin, kaempferol, quercetin, daidzin and puerarin. This is UDP-glycosyltransferase 1 from Pueraria montana var. lobata (Kudzu vine).